Here is a 96-residue protein sequence, read N- to C-terminus: Prokineticin Bv8-like peptide 2 (96 aa).

The first 19 residues, 1–19 (MKCFAQIVVLLLVIAFSHG), serve as a signal peptide directing secretion. Intrachain disulfides connect cysteine 26/cysteine 38, cysteine 32/cysteine 50, cysteine 37/cysteine 78, cysteine 60/cysteine 86, and cysteine 80/cysteine 95.

It belongs to the AVIT (prokineticin) family. Expressed by the skin glands.

The protein localises to the secreted. Potent agonist for both PKR1/PROKR1 and PKR2/PROKR2, and inducer of a potent and long-lasting hyperalgesia. Also potentiates capsaicin-induced TRPV1 current when tested on DRG neurons. At subnanomolar concentrations, this protein both induces potent chemotaxis of macrophages and stimulates LPS-induced production of the pro-inflammatory cytokines IL-1 and IL-12. In vivo, potently stimulates the contraction of the guinea-pig gastrointestinal (GI) smooth muscle (nanomolar concentration) and rabbit aortic rings. The polypeptide is Prokineticin Bv8-like peptide 2 (Bombina maxima (Giant fire-bellied toad)).